We begin with the raw amino-acid sequence, 230 residues long: Voltage-gated hydrogen channel 1 (230 aa).

The Cytoplasmic segment spans residues 1-58; that stretch reads MAGCLRHFTSVGDDTKKKAWKEEDVEVAHEEEPKNTPHPFIASYSFRGALKWLFSSHK. Residues 59–79 form a helical membrane-spanning segment; the sequence is FQIVIICLVILDALFVLVEVL. At 80 to 96 the chain is on the extracellular side; the sequence is LDLELLAEKVDHIIPEI. A helical membrane pass occupies residues 97–119; it reads FHYLSISVLSFFILEIAGKLYAF. At 120 to 127 the chain is on the cytoplasmic side; sequence RLEFFHHK. Residues 128-148 traverse the membrane as a helical segment; it reads FEVFDAAIVVISFIIDIVYIS. Topologically, residues 149–155 are extracellular; it reads REDIFNA. The helical transmembrane segment at 156–176 threads the bilayer; the sequence is VGLLILLRLWRVARIVNGIIV. Positions 177–226 form a coiled coil; the sequence is SVKTQAEDKIHRLKENQESLLEKVAHLEQQCAQQEQEIVRLQTLLQQHNV. Over 177-230 the chain is Cytoplasmic; the sequence is SVKTQAEDKIHRLKENQESLLEKVAHLEQQCAQQEQEIVRLQTLLQQHNVFPAS.

Belongs to the hydrogen channel family. In terms of assembly, homodimer.

Its subcellular location is the membrane. It localises to the cell membrane. Functionally, mediates the voltage-dependent proton permeability of excitable membranes. Forms a proton-selective channel through which protons may pass in accordance with their electrochemical gradient. This Xenopus tropicalis (Western clawed frog) protein is Voltage-gated hydrogen channel 1 (hvcn1).